The chain runs to 420 residues: UDP-N-acetylglucosamine 1-carboxyvinyltransferase (420 aa).

Residue 23–24 participates in phosphoenolpyruvate binding; that stretch reads KN. Arg92 is a UDP-N-acetyl-alpha-D-glucosamine binding site. Cys116 functions as the Proton donor in the catalytic mechanism. Position 116 is a 2-(S-cysteinyl)pyruvic acid O-phosphothioketal (Cys116). UDP-N-acetyl-alpha-D-glucosamine is bound by residues 121–125, 161–164, Asp306, and Ile328; these read RPVDL and KVSV.

It belongs to the EPSP synthase family. MurA subfamily.

The protein localises to the cytoplasm. It carries out the reaction phosphoenolpyruvate + UDP-N-acetyl-alpha-D-glucosamine = UDP-N-acetyl-3-O-(1-carboxyvinyl)-alpha-D-glucosamine + phosphate. The protein operates within cell wall biogenesis; peptidoglycan biosynthesis. Cell wall formation. Adds enolpyruvyl to UDP-N-acetylglucosamine. This chain is UDP-N-acetylglucosamine 1-carboxyvinyltransferase, found in Photobacterium profundum (strain SS9).